The sequence spans 251 residues: Phosphate import ATP-binding protein PstB (251 aa).

The region spanning 5–246 (MNSKDVNFWY…PENKKTEDYI (242 aa)) is the ABC transporter domain. An ATP-binding site is contributed by 37–44 (GPSGCGKS).

It belongs to the ABC transporter superfamily. Phosphate importer (TC 3.A.1.7) family. In terms of assembly, the complex is composed of two ATP-binding proteins (PstB), two transmembrane proteins (PstC and PstA) and a solute-binding protein (PstS).

The protein resides in the cell membrane. The enzyme catalyses phosphate(out) + ATP + H2O = ADP + 2 phosphate(in) + H(+). Part of the ABC transporter complex PstSACB involved in phosphate import. Responsible for energy coupling to the transport system. In Methanococcus maripaludis (strain DSM 14266 / JCM 13030 / NBRC 101832 / S2 / LL), this protein is Phosphate import ATP-binding protein PstB.